Consider the following 349-residue polypeptide: Phospho-N-acetylmuramoyl-pentapeptide-transferase (349 aa).

Transmembrane regions (helical) follow at residues 13-33 (LFFS…SLGV), 69-89 (GGGV…LPWG), 91-111 (FSTW…WYDD), 129-149 (FMVQ…IYGS), 165-185 (LSLP…VAII), 197-217 (LDGL…FVAL), 228-248 (VAYV…YNGF), 252-272 (LFMG…CAVM), 278-298 (ILVV…LQVL), and 327-347 (IVMR…AAVL).

Belongs to the glycosyltransferase 4 family. MraY subfamily. Requires Mg(2+) as cofactor.

The protein resides in the cell inner membrane. It catalyses the reaction UDP-N-acetyl-alpha-D-muramoyl-L-alanyl-gamma-D-glutamyl-meso-2,6-diaminopimeloyl-D-alanyl-D-alanine + di-trans,octa-cis-undecaprenyl phosphate = di-trans,octa-cis-undecaprenyl diphospho-N-acetyl-alpha-D-muramoyl-L-alanyl-D-glutamyl-meso-2,6-diaminopimeloyl-D-alanyl-D-alanine + UMP. The protein operates within cell wall biogenesis; peptidoglycan biosynthesis. Functionally, catalyzes the initial step of the lipid cycle reactions in the biosynthesis of the cell wall peptidoglycan: transfers peptidoglycan precursor phospho-MurNAc-pentapeptide from UDP-MurNAc-pentapeptide onto the lipid carrier undecaprenyl phosphate, yielding undecaprenyl-pyrophosphoryl-MurNAc-pentapeptide, known as lipid I. The chain is Phospho-N-acetylmuramoyl-pentapeptide-transferase from Chlamydia pneumoniae (Chlamydophila pneumoniae).